Consider the following 297-residue polypeptide: Virulence genes transcriptional activator (297 aa).

One can recognise an HTH lysR-type domain in the interval 1–61 (MDFLINKKLK…IRKNGTLIPT (61 aa)). The H-T-H motif DNA-binding region spans 21–40 (FSIATSVLYITRTPLSRVIS).

The protein belongs to the LysR transcriptional regulatory family.

It is found in the cytoplasm. Its function is as follows. Positive regulator for the plasmid-encoded virulence factors SpvA, SpvB, and SpvC. In Salmonella typhimurium (strain LT2 / SGSC1412 / ATCC 700720), this protein is Virulence genes transcriptional activator (mkaC).